We begin with the raw amino-acid sequence, 148 residues long: NADH-quinone oxidoreductase subunit C (148 aa).

The protein belongs to the complex I 30 kDa subunit family. In terms of assembly, NDH-1 is composed of 14 different subunits. Subunits NuoB, C, D, E, F, and G constitute the peripheral sector of the complex.

Its subcellular location is the cell membrane. The enzyme catalyses a quinone + NADH + 5 H(+)(in) = a quinol + NAD(+) + 4 H(+)(out). Functionally, NDH-1 shuttles electrons from NADH, via FMN and iron-sulfur (Fe-S) centers, to quinones in the respiratory chain. The immediate electron acceptor for the enzyme in this species is believed to be a menaquinone. Couples the redox reaction to proton translocation (for every two electrons transferred, four hydrogen ions are translocated across the cytoplasmic membrane), and thus conserves the redox energy in a proton gradient. The chain is NADH-quinone oxidoreductase subunit C from Moorella thermoacetica (strain ATCC 39073 / JCM 9320).